The primary structure comprises 475 residues: MEEDESTTPKKKSDSQLNLPPSMNRPTVSLESRINRLIDSNHYHSPSKPIYSDRFIPSRSGSNFALFDLASSSPNKKDGKEDGAGSYASLLKTALFGPVTPEKSDVVNGFSPSGNIFRFKTETQRSLNLYPPFDSDVVSGVSPSPVKSPRKILRSPYKVLDAPALQDDFYLNLVDWSAQNVLAVGLGNCVYLWNACSSKVTKLCDLGVDETVCSVGWALRGTHLAIGTSSGTVQIWDVLRCKNIRTMEGHRLRVGALAWSSSVLSSGSRDKSILQRDIRTQEDHVSKLKGHKSEICGLKWSSDNRELASGGNDNKLFVWNQHSTQPVLRFCEHAAAVKAIAWSPHHFGLLASGGGTADRCIRFWNTTTNTHLNCVDTNSQVCNLVWSKNVNELVSTHGYSQNQIIVWKYPTMSKLATLTGHSYRVLYLAVSPDGQTIVTGAGDETLRFWNVFPSPKSQSRESEIGALSFGRTTIR.

Residues 1–27 (MEEDESTTPKKKSDSQLNLPPSMNRPT) are disordered. Polar residues predominate over residues 15–27 (SQLNLPPSMNRPT). WD repeat units lie at residues 166–203 (QDDF…VTKL), 207–246 (GVDE…NIRT), 249–289 (GHRL…SKLK), 290–329 (GHKS…PVLR), 332–374 (EHAA…HLNC), 376–417 (DTNS…KLAT), and 420–459 (GHSY…KSQS).

It belongs to the WD repeat CDC20/Fizzy family. In terms of assembly, associates with the APC/C complex. Interacts with CDC20-1, CDC20-2, CYCA1-1, CYCA1-2, CYCA3-4, CYCB1-1 and CYCB1-2. Binds to GIG1. As to expression, expressed in the root tip, predominantly in the root cap, quiescent center cells, surrounding stem cells and columella.

The protein localises to the nucleus. It functions in the pathway protein modification; protein ubiquitination. Activator protein that regulates the ubiquitin ligase activity and substrate specificity of the anaphase promoting complex/cyclosome (APC/C). Required for meristem organization and maintenance of quiescent center identity and stem cells. This is Protein FIZZY-RELATED 1 (FZR1) from Arabidopsis thaliana (Mouse-ear cress).